The sequence spans 713 residues: Polyribonucleotide nucleotidyltransferase (713 aa).

Mg(2+) contacts are provided by Asp488 and Asp494. Residues Pro555–Ile614 form the KH domain. One can recognise an S1 motif domain in the interval Gly624–Lys692.

The protein belongs to the polyribonucleotide nucleotidyltransferase family. Requires Mg(2+) as cofactor.

The protein resides in the cytoplasm. The catalysed reaction is RNA(n+1) + phosphate = RNA(n) + a ribonucleoside 5'-diphosphate. Functionally, involved in mRNA degradation. Catalyzes the phosphorolysis of single-stranded polyribonucleotides processively in the 3'- to 5'-direction. The sequence is that of Polyribonucleotide nucleotidyltransferase from Brucella anthropi (strain ATCC 49188 / DSM 6882 / CCUG 24695 / JCM 21032 / LMG 3331 / NBRC 15819 / NCTC 12168 / Alc 37) (Ochrobactrum anthropi).